Consider the following 400-residue polypeptide: Enoyl-[acyl-carrier-protein] reductase [NADH] 2 (400 aa).

NAD(+) contacts are provided by residues 48-53, 75-76, 112-113, and 141-142; these read GASSGF, FE, DA, and LA. A substrate-binding site is contributed by tyrosine 227. Catalysis depends on tyrosine 237, which acts as the Proton donor. NAD(+) is bound by residues lysine 246 and 275–277; that span reads LVT.

Belongs to the TER reductase family. In terms of assembly, monomer.

The catalysed reaction is a 2,3-saturated acyl-[ACP] + NAD(+) = a (2E)-enoyl-[ACP] + NADH + H(+). It participates in lipid metabolism; fatty acid biosynthesis. Its function is as follows. Involved in the final reduction of the elongation cycle of fatty acid synthesis (FAS II). Catalyzes the reduction of a carbon-carbon double bond in an enoyl moiety that is covalently linked to an acyl carrier protein (ACP). This Photobacterium profundum (strain SS9) protein is Enoyl-[acyl-carrier-protein] reductase [NADH] 2.